The chain runs to 199 residues: TATA-box-binding protein (199 aa).

2 consecutive repeat copies span residues 10–86 and 101–177.

Belongs to the TBP family.

General factor that plays a role in the activation of archaeal genes transcribed by RNA polymerase. Binds specifically to the TATA box promoter element which lies close to the position of transcription initiation. The polypeptide is TATA-box-binding protein (Pyrobaculum islandicum (strain DSM 4184 / JCM 9189 / GEO3)).